A 525-amino-acid chain; its full sequence is GMP synthase [glutamine-hydrolyzing] (525 aa).

Residues 9–207 (RILILDFGSQ…VRDICQCEAL (199 aa)) enclose the Glutamine amidotransferase type-1 domain. The active-site Nucleophile is C86. Catalysis depends on residues H181 and E183. The region spanning 208–400 (WTPAKIIDDA…LGLPYDMLYR (193 aa)) is the GMPS ATP-PPase domain. 235–241 (SGGVDSS) provides a ligand contact to ATP.

Homodimer.

The enzyme catalyses XMP + L-glutamine + ATP + H2O = GMP + L-glutamate + AMP + diphosphate + 2 H(+). The protein operates within purine metabolism; GMP biosynthesis; GMP from XMP (L-Gln route): step 1/1. In terms of biological role, catalyzes the synthesis of GMP from XMP. The chain is GMP synthase [glutamine-hydrolyzing] from Shigella flexneri serotype 5b (strain 8401).